A 232-amino-acid chain; its full sequence is Large ribosomal subunit protein uL1 (232 aa).

This sequence belongs to the universal ribosomal protein uL1 family. In terms of assembly, part of the 50S ribosomal subunit.

Its function is as follows. Binds directly to 23S rRNA. The L1 stalk is quite mobile in the ribosome, and is involved in E site tRNA release. Functionally, protein L1 is also a translational repressor protein, it controls the translation of the L11 operon by binding to its mRNA. In Cutibacterium acnes (strain DSM 16379 / KPA171202) (Propionibacterium acnes), this protein is Large ribosomal subunit protein uL1.